The sequence spans 393 residues: Zinc finger CCCH domain-containing protein 2 (393 aa).

The segment at 1-71 (MDVVCTEHQM…NRENKEYCYD (71 aa)) is disordered. A compositionally biased stretch (low complexity) spans 20–37 (RKLLLSSKSFPSDSSSPR). Over residues 60 to 69 (DNNRENKEYC) the composition is skewed to basic and acidic residues. C3H1-type zinc fingers lie at residues 122 to 150 (QYSG…HGVF) and 159 to 181 (YRTE…AHSP).

As to quaternary structure, interacts with MARD1/FLZ9 and RD21A. Specifically expressed in seeds.

The protein resides in the nucleus. Probable transcription repressor that functions as a negative regulator of phytochrome-mediated promotion of seed germination. Inhibits seed germination by regulating the expression of gibberellic acid (GA) and abscisic acid (ABA) metabolic genes. Does not regulate the expression of the DELLA genes RGA and RGA1. Activated by PIL5, a phytochrome-interacting basic helix-loop-helix transcription factor. Represses directly JMJ20 and JMJ22 expression in the absence of red light (R) and in far-red (FR) conditions. This chain is Zinc finger CCCH domain-containing protein 2, found in Arabidopsis thaliana (Mouse-ear cress).